The sequence spans 551 residues: Meiotically up-regulated gene 184 protein (551 aa).

In terms of domain architecture, J spans 12–78; the sequence is DYYAILKLQK…TKRLIYDQLF (67 aa). Over residues 85–122 the composition is skewed to polar residues; the sequence is RSQYKPNSTSNPSKHTSAYASYNKGKNSKWSSPFASTT. 3 disordered regions span residues 85 to 153, 176 to 226, and 334 to 359; these read RSQY…FPRD, RQEP…SVYK, and EAESSNPFSFDFGSSGPKSRSDTRNN. Residues 124–133 show a composition bias toward basic and acidic residues; it reads KPQESSEKYS. Residues 134-146 show a composition bias toward basic residues; that stretch reads KKSSTRKKEHFNK. 2 stretches are compositionally biased toward basic and acidic residues: residues 176 to 187 and 203 to 219; these read RQEPESLKKENN and GPKDSSKHPSNDGKIPE.

The protein localises to the cytoplasm. The protein resides in the cytoskeleton. Has a role in sporulation. This chain is Meiotically up-regulated gene 184 protein (mug184), found in Schizosaccharomyces pombe (strain 972 / ATCC 24843) (Fission yeast).